Here is a 361-residue protein sequence, read N- to C-terminus: 3-dehydroquinate synthase (361 aa).

NAD(+)-binding positions include 73-78, 107-111, 131-132, lysine 144, lysine 153, and 171-174; these read DAEAGK, GAATD, TT, and TLET. Residues glutamate 186, histidine 249, and histidine 265 each contribute to the Zn(2+) site.

This sequence belongs to the sugar phosphate cyclases superfamily. Dehydroquinate synthase family. NAD(+) serves as cofactor. Requires Co(2+) as cofactor. The cofactor is Zn(2+).

The protein resides in the cytoplasm. It catalyses the reaction 7-phospho-2-dehydro-3-deoxy-D-arabino-heptonate = 3-dehydroquinate + phosphate. It participates in metabolic intermediate biosynthesis; chorismate biosynthesis; chorismate from D-erythrose 4-phosphate and phosphoenolpyruvate: step 2/7. In terms of biological role, catalyzes the conversion of 3-deoxy-D-arabino-heptulosonate 7-phosphate (DAHP) to dehydroquinate (DHQ). In Mycobacterium leprae (strain TN), this protein is 3-dehydroquinate synthase.